A 61-amino-acid chain; its full sequence is Large ribosomal subunit protein bL32 (61 aa).

A compositionally biased stretch (basic residues) spans 1–16 (MAVPKRKTSPSKRGMR). Residues 1–61 (MAVPKRKTSP…RQVLTPKESA (61 aa)) form a disordered region. Residues 28-44 (VEDKNSGELRRPHHIDL) are compositionally biased toward basic and acidic residues.

The protein belongs to the bacterial ribosomal protein bL32 family.

The polypeptide is Large ribosomal subunit protein bL32 (Rhizobium etli (strain CIAT 652)).